Reading from the N-terminus, the 207-residue chain is Superoxide dismutase [Mn] (207 aa).

Mn(2+) contacts are provided by histidine 30, histidine 78, aspartate 166, and histidine 170.

This sequence belongs to the iron/manganese superoxide dismutase family. Homodimer. It depends on Mn(2+) as a cofactor.

It carries out the reaction 2 superoxide + 2 H(+) = H2O2 + O2. Functionally, destroys superoxide anion radicals which are normally produced within the cells and which are toxic to biological systems. This is Superoxide dismutase [Mn] (sodA) from Chlamydia pneumoniae (Chlamydophila pneumoniae).